The chain runs to 314 residues: Mycothiol acetyltransferase (314 aa).

Glu39 is a 1D-myo-inositol 2-(L-cysteinylamino)-2-deoxy-alpha-D-glucopyranoside binding site. 80–82 contacts acetyl-CoA; the sequence is LTA. The N-acetyltransferase domain occupies 159 to 313; sequence FVCRRFDPIS…PTGELGHEPP (155 aa). 1D-myo-inositol 2-(L-cysteinylamino)-2-deoxy-alpha-D-glucopyranoside-binding residues include Glu186, Lys228, and Glu237. Acetyl-CoA-binding positions include 241–243 and 248–254; these read LGV and QGQGVGR. Residue Tyr275 participates in 1D-myo-inositol 2-(L-cysteinylamino)-2-deoxy-alpha-D-glucopyranoside binding.

Belongs to the acetyltransferase family. MshD subfamily. Monomer.

The enzyme catalyses 1D-myo-inositol 2-(L-cysteinylamino)-2-deoxy-alpha-D-glucopyranoside + acetyl-CoA = mycothiol + CoA + H(+). Catalyzes the transfer of acetyl from acetyl-CoA to desacetylmycothiol (Cys-GlcN-Ins) to form mycothiol. In Jonesia denitrificans (strain ATCC 14870 / DSM 20603 / BCRC 15368 / CIP 55.134 / JCM 11481 / NBRC 15587 / NCTC 10816 / Prevot 55134) (Listeria denitrificans), this protein is Mycothiol acetyltransferase.